Consider the following 137-residue polypeptide: Phosphoribosyl-AMP cyclohydrolase (137 aa).

Residue Asp-84 participates in Mg(2+) binding. Cys-85 serves as a coordination point for Zn(2+). Mg(2+) contacts are provided by Asp-86 and Asp-88. Residues Cys-101 and Cys-108 each contribute to the Zn(2+) site.

Belongs to the PRA-CH family. In terms of assembly, homodimer. The cofactor is Mg(2+). Requires Zn(2+) as cofactor.

It localises to the cytoplasm. The enzyme catalyses 1-(5-phospho-beta-D-ribosyl)-5'-AMP + H2O = 1-(5-phospho-beta-D-ribosyl)-5-[(5-phospho-beta-D-ribosylamino)methylideneamino]imidazole-4-carboxamide. It functions in the pathway amino-acid biosynthesis; L-histidine biosynthesis; L-histidine from 5-phospho-alpha-D-ribose 1-diphosphate: step 3/9. Functionally, catalyzes the hydrolysis of the adenine ring of phosphoribosyl-AMP. The protein is Phosphoribosyl-AMP cyclohydrolase of Chlorobaculum parvum (strain DSM 263 / NCIMB 8327) (Chlorobium vibrioforme subsp. thiosulfatophilum).